Here is a 119-residue protein sequence, read N- to C-terminus: uncharacterized protein (119 aa).

An N-terminal signal peptide occupies residues 1–23 (MVKWAVSILVNALLLIVIDGYID). The next 3 helical transmembrane spans lie at 27–47 (ISSI…NVLI), 50–70 (LLII…LFVI), and 88–108 (IDGF…HLLI).

The protein resides in the cell membrane. This is an uncharacterized protein from Bacillus subtilis (strain 168).